The primary structure comprises 336 residues: tRNA N6-adenosine threonylcarbamoyltransferase (336 aa).

Positions 114 and 118 each coordinate Fe cation. Residues Leu136 to Gly140, Asp169, Gly182, Asp186, and Asn275 contribute to the substrate site. Residue Asp301 participates in Fe cation binding.

The protein belongs to the KAE1 / TsaD family. The cofactor is Fe(2+).

It localises to the cytoplasm. The enzyme catalyses L-threonylcarbamoyladenylate + adenosine(37) in tRNA = N(6)-L-threonylcarbamoyladenosine(37) in tRNA + AMP + H(+). In terms of biological role, required for the formation of a threonylcarbamoyl group on adenosine at position 37 (t(6)A37) in tRNAs that read codons beginning with adenine. Is involved in the transfer of the threonylcarbamoyl moiety of threonylcarbamoyl-AMP (TC-AMP) to the N6 group of A37, together with TsaE and TsaB. TsaD likely plays a direct catalytic role in this reaction. This Streptococcus pneumoniae (strain CGSP14) protein is tRNA N6-adenosine threonylcarbamoyltransferase.